Here is a 368-residue protein sequence, read N- to C-terminus: Heme A synthase (368 aa).

Helical transmembrane passes span 14–34 (AVRIWLTLVAALIAVMVLVGG), 104–124 (VIGIVYLLPFLWFLWRGAIGP), 129–149 (ALWIIFALGALQGAVGWWMVA), 161–181 (VRLATHLSLALIIYAAIVWTL), and 200–220 (ALALLGLTFVQLYAGALVAGL). H264 serves as a coordination point for heme. The next 3 helical transmembrane spans lie at 266–283 (MLAYALWTLAALHMIDAL), 296–316 (FLALTAQATLGIFTVLYAAPI), and 318–338 (LALVHQAMALVVLTLAVLQAE). Residue H322 coordinates heme.

This sequence belongs to the COX15/CtaA family. Type 2 subfamily. Interacts with CtaB. Heme b is required as a cofactor.

It localises to the cell membrane. It carries out the reaction Fe(II)-heme o + 2 A + H2O = Fe(II)-heme a + 2 AH2. It functions in the pathway porphyrin-containing compound metabolism; heme A biosynthesis; heme A from heme O: step 1/1. Its function is as follows. Catalyzes the conversion of heme O to heme A by two successive hydroxylations of the methyl group at C8. The first hydroxylation forms heme I, the second hydroxylation results in an unstable dihydroxymethyl group, which spontaneously dehydrates, resulting in the formyl group of heme A. The protein is Heme A synthase of Rhodopseudomonas palustris (strain ATCC BAA-98 / CGA009).